The chain runs to 176 residues: NAD(P)H-quinone oxidoreductase subunit 6, chloroplastic (176 aa).

A run of 5 helical transmembrane segments spans residues 10 to 30, 32 to 52, 61 to 81, 92 to 112, and 152 to 172; these read FLLV…VLLT, PIYS…LYIL, AQLL…VMFM, LWTV…GLLI, and FFLP…GAIT.

The protein belongs to the complex I subunit 6 family. As to quaternary structure, NDH is composed of at least 16 different subunits, 5 of which are encoded in the nucleus.

The protein localises to the plastid. It is found in the chloroplast thylakoid membrane. The catalysed reaction is a plastoquinone + NADH + (n+1) H(+)(in) = a plastoquinol + NAD(+) + n H(+)(out). The enzyme catalyses a plastoquinone + NADPH + (n+1) H(+)(in) = a plastoquinol + NADP(+) + n H(+)(out). Functionally, NDH shuttles electrons from NAD(P)H:plastoquinone, via FMN and iron-sulfur (Fe-S) centers, to quinones in the photosynthetic chain and possibly in a chloroplast respiratory chain. The immediate electron acceptor for the enzyme in this species is believed to be plastoquinone. Couples the redox reaction to proton translocation, and thus conserves the redox energy in a proton gradient. The sequence is that of NAD(P)H-quinone oxidoreductase subunit 6, chloroplastic (ndhG) from Morus indica (Mulberry).